The primary structure comprises 277 residues: Tumor necrosis factor receptor superfamily member 4 (277 aa).

The first 28 residues, 1-28 (MCVGARRLGRGPCAALLLLGLGLSTVTG), serve as a signal peptide directing secretion. Residues 29–214 (LHCVGDTYPS…RPVEVPGGRA (186 aa)) lie on the Extracellular side of the membrane. TNFR-Cys repeat units follow at residues 30–65 (HCVGDTYPSNDRCCHECRPGNGMVSRCSRSQNTVCR) and 66–107 (PCGP…DTVC). 8 cysteine pairs are disulfide-bonded: Cys-31–Cys-42, Cys-43–Cys-56, Cys-46–Cys-64, Cys-67–Cys-81, Cys-84–Cys-99, Cys-87–Cys-107, Cys-109–Cys-125, and Cys-128–Cys-141. The TNFR-Cys 3; truncated repeat unit spans residues 108–126 (RCRAGTQPLDSYKPGVDCA). A TNFR-Cys 4 repeat occupies 127–167 (PCPPGHFSPGDNQACKPWTNCTLAGKHTLQPASNSSDAICE). 2 N-linked (GlcNAc...) asparagine glycosylation sites follow: Asn-146 and Asn-160. An intrachain disulfide couples Cys-147 to Cys-166. Residues 158–209 (ASNSSDAICEDRDPPATQPQETQGPPARPITVQPTEAWPRTSQGPSTRPVEV) form a disordered region. A helical transmembrane segment spans residues 215–235 (VAAILGLGLVLGLLGPLAILL). The Cytoplasmic portion of the chain corresponds to 236-277 (ALYLLRRDQRLPPDAHKPPGGGSFRTPIQEEQADAHSTLAKI). Residues 248 to 277 (PDAHKPPGGGSFRTPIQEEQADAHSTLAKI) form a disordered region.

Interacts with TRAF2, TRAF3 and TRAF5. In terms of assembly, (Microbial infection) Interacts with Human herpesvirus 6B/HHV-6B gQ1:gQ2 proteins.

The protein localises to the membrane. Receptor for TNFSF4/OX40L/GP34. Is a costimulatory molecule implicated in long-term T-cell immunity. In terms of biological role, (Microbial infection) Acts as a receptor for human herpesvirus 6B/HHV-6B. This is Tumor necrosis factor receptor superfamily member 4 (TNFRSF4) from Homo sapiens (Human).